The following is a 332-amino-acid chain: Phenylalanine--tRNA ligase alpha subunit (332 aa).

Residue glutamate 254 coordinates Mg(2+).

It belongs to the class-II aminoacyl-tRNA synthetase family. Phe-tRNA synthetase alpha subunit type 1 subfamily. Tetramer of two alpha and two beta subunits. Mg(2+) serves as cofactor.

It is found in the cytoplasm. The catalysed reaction is tRNA(Phe) + L-phenylalanine + ATP = L-phenylalanyl-tRNA(Phe) + AMP + diphosphate + H(+). This chain is Phenylalanine--tRNA ligase alpha subunit, found in Hydrogenovibrio crunogenus (strain DSM 25203 / XCL-2) (Thiomicrospira crunogena).